Reading from the N-terminus, the 105-residue chain is Cyclotide vibi-J (105 aa).

The first 9 residues, 1–9, serve as a signal peptide directing secretion; the sequence is AAFALPALA. A propeptide spanning residues 10–71 is cleaved from the precursor; the sequence is TSFEKDFITH…KSSNSINALG (62 aa). A cross-link (cyclopeptide (Gly-Asn)) is located at residues 72–102; sequence GTFPCGESCVWIPCISKVIGCACKSKVCYKN. 3 cysteine pairs are disulfide-bonded: C76–C92, C80–C94, and C85–C99. The propeptide occupies 103–105; the sequence is SLA.

This is a cyclic peptide.

Its function is as follows. Probably participates in a plant defense mechanism. This chain is Cyclotide vibi-J, found in Viola biflora (Yellow wood violet).